Reading from the N-terminus, the 603-residue chain is Golgin subfamily A member 8B (603 aa).

Disordered stretches follow at residues 1-82 (MAEE…NSRS), 95-125 (LKQQ…ELEG), 398-419 (TSAE…ESSG), and 460-492 (PGDS…GAAG). Positions 46–66 (AASGGCHSSEASSSASSSLHA) are enriched in low complexity. Polar residues predominate over residues 69–82 (SPCQEQAAVLNSRS). 2 coiled-coil regions span residues 82-173 (SIKI…GELE) and 212-440 (LKGH…LELG). Positions 100 to 124 (KQVEHQLEEEKKANNEKQKAERELE) are enriched in basic and acidic residues. A compositionally biased stretch (gly residues) spans 469–482 (PGGGHHQAGPGQGG). A golgi-targeting domain region spans residues 491-603 (AGDGVAACGS…CWAWLPRRRR (113 aa)).

The protein belongs to the GOLGA8 family. As to expression, highly expressed in brain, heart and kidney. Detected at lower levels in liver, thymus, spleen, lung and peripheral blood leukocytes.

It localises to the golgi apparatus. Its subcellular location is the golgi stack membrane. Functionally, may be involved in maintaining Golgi structure. The polypeptide is Golgin subfamily A member 8B (GOLGA8B) (Homo sapiens (Human)).